The chain runs to 38 residues: Photosystem II reaction center protein L (38 aa).

A helical membrane pass occupies residues 17 to 37 (SLFLGRLLIFVLGILFSSYIF).

The protein belongs to the PsbL family. In terms of assembly, PSII is composed of 1 copy each of membrane proteins PsbA, PsbB, PsbC, PsbD, PsbE, PsbF, PsbH, PsbI, PsbJ, PsbK, PsbL, PsbM, PsbT, PsbX, PsbY, PsbZ, Psb30/Ycf12, peripheral proteins PsbO, CyanoQ (PsbQ), PsbU, PsbV and a large number of cofactors. It forms dimeric complexes.

The protein resides in the cellular thylakoid membrane. In terms of biological role, one of the components of the core complex of photosystem II (PSII). PSII is a light-driven water:plastoquinone oxidoreductase that uses light energy to abstract electrons from H(2)O, generating O(2) and a proton gradient subsequently used for ATP formation. It consists of a core antenna complex that captures photons, and an electron transfer chain that converts photonic excitation into a charge separation. This subunit is found at the monomer-monomer interface and is required for correct PSII assembly and/or dimerization. The sequence is that of Photosystem II reaction center protein L from Prochlorothrix hollandica.